A 190-amino-acid chain; its full sequence is Ribosome hibernation promotion factor (190 aa).

The tract at residues 101-190 (RDRGDQEVFV…KYGLIQTSEQ (90 aa)) is required for ribosome-binding.

Belongs to the HPF/YfiA ribosome-associated protein family. Long HPF subfamily. Interacts with 100S ribosomes during exponential growth, as 100S ribosomes decrease (after 28 hours) also found associated with 30s and 50S subunits.

The protein resides in the cytoplasm. Required and sufficient for dimerization of active 70S ribosomes into 100S ribosomes. 110S ribosomes are probably translationally inactive and may serve as a reservoir of easily reactivated ribosomes when necessary in the cell. Also reduces the translation efficiency of a small number of genes. Unlike E.coli, 100S ribosomes are present during exponential growth and decrease during stationary phase. This strain produces 30% fewer 100S ribosomes than strain N315 and RN4200 under the same growth conditions. In Staphylococcus aureus (strain USA300), this protein is Ribosome hibernation promotion factor.